The primary structure comprises 173 residues: MTNDSEIVVEEKISGPISDWLSNKGFENIPLKEDHLGIEVIKISPNNLLSIVEALKNDGFNYLQCQGGYDEGPGLNIVCFYNLIEMNELKEDISPREVRLKVFLDRNGDLTVPSLYSLFRGADWQERETFDMYGVNFKGHPHPKRLLMPEDWKGWPLRKDYVQPDFYEMQDAY.

Belongs to the complex I 30 kDa subunit family. NDH-1 can be composed of about 15 different subunits; different subcomplexes with different compositions have been identified which probably have different functions.

Its subcellular location is the cellular thylakoid membrane. It carries out the reaction a plastoquinone + NADH + (n+1) H(+)(in) = a plastoquinol + NAD(+) + n H(+)(out). The catalysed reaction is a plastoquinone + NADPH + (n+1) H(+)(in) = a plastoquinol + NADP(+) + n H(+)(out). Its function is as follows. NDH-1 shuttles electrons from an unknown electron donor, via FMN and iron-sulfur (Fe-S) centers, to quinones in the respiratory and/or the photosynthetic chain. The immediate electron acceptor for the enzyme in this species is believed to be plastoquinone. Couples the redox reaction to proton translocation, and thus conserves the redox energy in a proton gradient. Cyanobacterial NDH-1 also plays a role in inorganic carbon-concentration. The chain is NAD(P)H-quinone oxidoreductase subunit J from Prochlorococcus marinus (strain NATL1A).